The primary structure comprises 285 residues: Pantothenate synthetase (285 aa).

30–37 is an ATP binding site; the sequence is MGFLHEGH. The Proton donor role is filled by His37. A (R)-pantoate-binding site is contributed by Gln61. Gln61 serves as a coordination point for beta-alanine. An ATP-binding site is contributed by 148 to 151; it reads GKKD. Residue Gln154 participates in (R)-pantoate binding. ATP contacts are provided by residues Val177 and 185–188; that span reads LSSR.

This sequence belongs to the pantothenate synthetase family. In terms of assembly, homodimer.

It is found in the cytoplasm. The enzyme catalyses (R)-pantoate + beta-alanine + ATP = (R)-pantothenate + AMP + diphosphate + H(+). The protein operates within cofactor biosynthesis; (R)-pantothenate biosynthesis; (R)-pantothenate from (R)-pantoate and beta-alanine: step 1/1. Its function is as follows. Catalyzes the condensation of pantoate with beta-alanine in an ATP-dependent reaction via a pantoyl-adenylate intermediate. This chain is Pantothenate synthetase, found in Leptospira interrogans serogroup Icterohaemorrhagiae serovar copenhageni (strain Fiocruz L1-130).